A 176-amino-acid chain; its full sequence is Mitochondrial inner membrane protein Mpv17 (176 aa).

Helical transmembrane passes span 18-38 (VQVL…QQLV), 57-77 (LGCG…DHLI), 94-114 (GGFA…LNGM), and 131-151 (LITN…LVPL).

It belongs to the peroxisomal membrane protein PXMP2/4 family.

The protein localises to the mitochondrion inner membrane. Its function is as follows. Non-selective channel that modulates the membrane potential under normal conditions and oxidative stress, and is involved in mitochondrial homeostasis. Involved in mitochondrial deoxynucleoside triphosphates (dNTP) pool homeostasis and mitochondrial DNA (mtDNA) maintenance. May be involved in the regulation of reactive oxygen species metabolism and the control of oxidative phosphorylation. In Rattus norvegicus (Rat), this protein is Mitochondrial inner membrane protein Mpv17.